The following is a 342-amino-acid chain: Holliday junction branch migration complex subunit RuvB (342 aa).

The tract at residues Met-1–Tyr-182 is large ATPase domain (RuvB-L). ATP is bound by residues Ile-21, Arg-22, Gly-63, Lys-66, Thr-67, Thr-68, Glu-129 to Tyr-131, Arg-172, Tyr-182, and Arg-219. Position 67 (Thr-67) interacts with Mg(2+). A small ATPAse domain (RuvB-S) region spans residues Ser-183–Glu-253. The segment at Glu-256–Ser-342 is head domain (RuvB-H). Arg-311 and Arg-316 together coordinate DNA.

It belongs to the RuvB family. Homohexamer. Forms an RuvA(8)-RuvB(12)-Holliday junction (HJ) complex. HJ DNA is sandwiched between 2 RuvA tetramers; dsDNA enters through RuvA and exits via RuvB. An RuvB hexamer assembles on each DNA strand where it exits the tetramer. Each RuvB hexamer is contacted by two RuvA subunits (via domain III) on 2 adjacent RuvB subunits; this complex drives branch migration. In the full resolvosome a probable DNA-RuvA(4)-RuvB(12)-RuvC(2) complex forms which resolves the HJ.

It localises to the cytoplasm. It catalyses the reaction ATP + H2O = ADP + phosphate + H(+). Its function is as follows. The RuvA-RuvB-RuvC complex processes Holliday junction (HJ) DNA during genetic recombination and DNA repair, while the RuvA-RuvB complex plays an important role in the rescue of blocked DNA replication forks via replication fork reversal (RFR). RuvA specifically binds to HJ cruciform DNA, conferring on it an open structure. The RuvB hexamer acts as an ATP-dependent pump, pulling dsDNA into and through the RuvAB complex. RuvB forms 2 homohexamers on either side of HJ DNA bound by 1 or 2 RuvA tetramers; 4 subunits per hexamer contact DNA at a time. Coordinated motions by a converter formed by DNA-disengaged RuvB subunits stimulates ATP hydrolysis and nucleotide exchange. Immobilization of the converter enables RuvB to convert the ATP-contained energy into a lever motion, pulling 2 nucleotides of DNA out of the RuvA tetramer per ATP hydrolyzed, thus driving DNA branch migration. The RuvB motors rotate together with the DNA substrate, which together with the progressing nucleotide cycle form the mechanistic basis for DNA recombination by continuous HJ branch migration. Branch migration allows RuvC to scan DNA until it finds its consensus sequence, where it cleaves and resolves cruciform DNA. This chain is Holliday junction branch migration complex subunit RuvB, found in Chlorobaculum parvum (strain DSM 263 / NCIMB 8327) (Chlorobium vibrioforme subsp. thiosulfatophilum).